The sequence spans 193 residues: Holliday junction branch migration complex subunit RuvA (193 aa).

The interval 1 to 63 (MIGKLTGTVT…ENINKLYGFE (63 aa)) is domain I. Positions 64–148 (CRKSQEVARM…GIASSTNVHI (85 aa)) are domain II. The tract at residues 149 to 150 (AS) is flexible linker. Positions 150–193 (SEAVSALVKLGFQHKPSHKVVMEIMTKRPAIEIAELITLALKML) are domain III.

This sequence belongs to the RuvA family. In terms of assembly, homotetramer. Forms an RuvA(8)-RuvB(12)-Holliday junction (HJ) complex. HJ DNA is sandwiched between 2 RuvA tetramers; dsDNA enters through RuvA and exits via RuvB. An RuvB hexamer assembles on each DNA strand where it exits the tetramer. Each RuvB hexamer is contacted by two RuvA subunits (via domain III) on 2 adjacent RuvB subunits; this complex drives branch migration. In the full resolvosome a probable DNA-RuvA(4)-RuvB(12)-RuvC(2) complex forms which resolves the HJ.

It is found in the cytoplasm. The RuvA-RuvB-RuvC complex processes Holliday junction (HJ) DNA during genetic recombination and DNA repair, while the RuvA-RuvB complex plays an important role in the rescue of blocked DNA replication forks via replication fork reversal (RFR). RuvA specifically binds to HJ cruciform DNA, conferring on it an open structure. The RuvB hexamer acts as an ATP-dependent pump, pulling dsDNA into and through the RuvAB complex. HJ branch migration allows RuvC to scan DNA until it finds its consensus sequence, where it cleaves and resolves the cruciform DNA. The protein is Holliday junction branch migration complex subunit RuvA of Neorickettsia sennetsu (strain ATCC VR-367 / Miyayama) (Ehrlichia sennetsu).